We begin with the raw amino-acid sequence, 447 residues long: Na(+)-translocating NADH-quinone reductase subunit A (447 aa).

It belongs to the NqrA family. In terms of assembly, composed of six subunits; NqrA, NqrB, NqrC, NqrD, NqrE and NqrF.

The catalysed reaction is a ubiquinone + n Na(+)(in) + NADH + H(+) = a ubiquinol + n Na(+)(out) + NAD(+). NQR complex catalyzes the reduction of ubiquinone-1 to ubiquinol by two successive reactions, coupled with the transport of Na(+) ions from the cytoplasm to the periplasm. NqrA to NqrE are probably involved in the second step, the conversion of ubisemiquinone to ubiquinol. The chain is Na(+)-translocating NADH-quinone reductase subunit A from Yersinia pestis bv. Antiqua (strain Angola).